A 299-amino-acid chain; its full sequence is ATP phosphoribosyltransferase (299 aa).

It belongs to the ATP phosphoribosyltransferase family. Long subfamily. In terms of assembly, equilibrium between an active dimeric form, an inactive hexameric form and higher aggregates. Interconversion between the various forms is largely reversible and is influenced by the natural substrates and inhibitors of the enzyme. Mg(2+) serves as cofactor.

The protein resides in the cytoplasm. It catalyses the reaction 1-(5-phospho-beta-D-ribosyl)-ATP + diphosphate = 5-phospho-alpha-D-ribose 1-diphosphate + ATP. Its pathway is amino-acid biosynthesis; L-histidine biosynthesis; L-histidine from 5-phospho-alpha-D-ribose 1-diphosphate: step 1/9. Its activity is regulated as follows. Feedback inhibited by histidine. Functionally, catalyzes the condensation of ATP and 5-phosphoribose 1-diphosphate to form N'-(5'-phosphoribosyl)-ATP (PR-ATP). Has a crucial role in the pathway because the rate of histidine biosynthesis seems to be controlled primarily by regulation of HisG enzymatic activity. This Escherichia coli O17:K52:H18 (strain UMN026 / ExPEC) protein is ATP phosphoribosyltransferase.